A 754-amino-acid chain; its full sequence is Peptidyl-prolyl cis-trans isomerase G (754 aa).

Residues 11–176 (FFDIAINNQP…AEVRILSCGE (166 aa)) enclose the PPIase cyclophilin-type domain. Residues 182–193 (KVKKEEKKRHKS) show a composition bias toward basic residues. Residues 182-754 (KVKKEEKKRH…SPGTDEDKSG (573 aa)) form a disordered region. Residues 194-216 (SSSSSSSSSDSDSSSDSQSSSDS) are compositionally biased toward low complexity. The span at 228–253 (KKRKKKHRKNSRKHKKEKKKRKKSKK) shows a compositional bias: basic residues. Phosphoserine occurs at positions 254, 256, 257, 259, and 290. A compositionally biased stretch (basic and acidic residues) spans 292 to 310 (PKADEKERKNREREREREC). Residue Ser-315 is modified to Phosphoserine. The span at 329–347 (SGRKIKGRGPRRYRTPSRS) shows a compositional bias: basic residues. Basic and acidic residues-rich tracts occupy residues 348–368 (RSRD…EMQR) and 379–449 (RWIK…DKYK). At Ser-356 the chain carries Phosphoserine. Thr-358 is modified (phosphothreonine). Ser-386 bears the Phosphoserine mark. Residue Lys-392 forms a Glycyl lysine isopeptide (Lys-Gly) (interchain with G-Cter in SUMO2) linkage. Phosphoserine occurs at positions 397, 413, and 415. The segment covering 450-462 (NKVKKRAKSKSRS) has biased composition (basic residues). Basic and acidic residues-rich tracts occupy residues 463–553 (KSKE…DITK) and 578–599 (RTHD…QEYR). Over residues 616-627 (SRSKDRRRRRRD) the composition is skewed to basic residues. Basic and acidic residues predominate over residues 628-686 (SRSSEREESQSRNKDKYRNQESKSSHRKENSESEKRMYSKSRDHNSSNNSREKKADRDQ). A phosphoserine mark is found at Ser-687 and Ser-690. The segment covering 687–698 (SPFSKIKQSSQD) has biased composition (polar residues). Lys-693 participates in a covalent cross-link: Glycyl lysine isopeptide (Lys-Gly) (interchain with G-Cter in SUMO2). Ser-696, Ser-744, and Ser-745 each carry phosphoserine. Residues 707–754 (KNKEDEKIRSSVEKENQKSKGQENDHVHEKNKKFDHESSPGTDEDKSG) are compositionally biased toward basic and acidic residues. Position 748 is a phosphothreonine (Thr-748). Ser-753 bears the Phosphoserine mark.

As to quaternary structure, interacts with CLK1, PNN and with the phosphorylated C-terminal domain of RNA polymerase II. As to expression, ubiquitous.

It localises to the nucleus matrix. The protein resides in the nucleus speckle. It carries out the reaction [protein]-peptidylproline (omega=180) = [protein]-peptidylproline (omega=0). Inhibited by cyclosporin A (CsA). In terms of biological role, PPIase that catalyzes the cis-trans isomerization of proline imidic peptide bonds in oligopeptides and may therefore assist protein folding. May be implicated in the folding, transport, and assembly of proteins. May play an important role in the regulation of pre-mRNA splicing. This is Peptidyl-prolyl cis-trans isomerase G (PPIG) from Homo sapiens (Human).